A 125-amino-acid chain; its full sequence is Fluoride-specific ion channel FluC (125 aa).

The next 4 membrane-spanning stretches (helical) occupy residues 4 to 24 (PLLAVMIGGCAGCVIRWLLAV), 36 to 56 (GTLLVNLVGGLIIGATVAWFA), 68 to 88 (LITTGLCGGMTTFSTFSLEVV), and 100 to 120 (VISVLTHVTGSLLMTIAGFWL). Positions 75 and 78 each coordinate Na(+).

The protein belongs to the fluoride channel Fluc/FEX (TC 1.A.43) family.

The protein localises to the cell inner membrane. The catalysed reaction is fluoride(in) = fluoride(out). Its activity is regulated as follows. Na(+) is not transported, but it plays an essential structural role and its presence is essential for fluoride channel function. In terms of biological role, fluoride-specific ion channel. Important for reducing fluoride concentration in the cell, thus reducing its toxicity. The chain is Fluoride-specific ion channel FluC from Erwinia tasmaniensis (strain DSM 17950 / CFBP 7177 / CIP 109463 / NCPPB 4357 / Et1/99).